We begin with the raw amino-acid sequence, 108 residues long: Putative septation protein SpoVG (108 aa).

The protein belongs to the SpoVG family.

In terms of biological role, could be involved in septation. The chain is Putative septation protein SpoVG from Bdellovibrio bacteriovorus (strain ATCC 15356 / DSM 50701 / NCIMB 9529 / HD100).